We begin with the raw amino-acid sequence, 1518 residues long: WD repeat-containing protein 62 (1518 aa).

Ala-2 carries the post-translational modification N-acetylalanine. Residue Ser-33 is modified to Phosphoserine. A Phosphothreonine modification is found at Thr-46. Ser-49 is modified (phosphoserine). Residue Thr-50 is modified to Phosphothreonine. Ser-52 carries the post-translational modification Phosphoserine. WD repeat units lie at residues 109–150 (TARK…QVAE), 153–194 (GHKY…VVAS), 196–234 (KVSCRVIALSFSEDSSYFVTVGNRHVRFWFLEVSTETKV), 291–330 (INLKVSLSSCLCVSQELIFCGCTDGIVRIFQAHSLHYLAN), 357–396 (AVYPDTVALTFDPIHQWLSCVYKDHSIYIWDVKDINRVGK), 402–450 (FHSS…DSHW), 490–529 (DVKAGVRVMQVSPDGQHLASGDRSGNLRIHELHFMDELVK), 532–574 (AHDA…NLEQ), 578–618 (DHSS…DGLH), 626–665 (AEKTTLYDMDIDITQKYVAVACQDRNVRVYNTVNGKQKKC), 671–713 (GDEG…KMFG), and 714–752 (HSEIITSMKFTYDCHHLITVSGDSCVFIWHLGPEITNCM). Ser-501 bears the Phosphoserine mark. The span at 762 to 772 (RQQQQHTNDKK) shows a compositional bias: basic and acidic residues. Disordered stretches follow at residues 762 to 824 (RQQQ…DPDP) and 908 to 935 (ASLLSESESPQEAGRGHPSFLPQQKESS). Over residues 781–790 (TYVSTPSEIH) the composition is skewed to polar residues. Over residues 797 to 809 (QTEDDLEEECEPE) the composition is skewed to acidic residues. A WD 13 repeat occupies 803-846 (EEECEPEEMLKTPSKDSLDPDPRCLLTNGKLPLWAKRLLGDDDV). Residues 810–824 (EMLKTPSKDSLDPDP) show a composition bias toward basic and acidic residues. Low complexity predominate over residues 908 to 920 (ASLLSESESPQEA). Ser-944 carries the phosphoserine modification. Positions 962–1055 (EVEAGPGDQQ…PSSSLPQTPE (94 aa)) are disordered. Polar residues-rich tracts occupy residues 971–981 (QGDSYLRVSSD) and 1045–1054 (VPSSSLPQTP). Thr-1053 carries the phosphothreonine modification. 8 positions are modified to phosphoserine: Ser-1070, Ser-1093, Ser-1101, Ser-1123, Ser-1144, Ser-1228, Ser-1248, and Ser-1249. One copy of the WD 14 repeat lies at 1132-1173 (GGSQPRAGTGYASPDRTHVLAAGKAEETLEAWRPPPPCLTSL). A WD 15 repeat occupies 1255–1293 (SLGQELQAITTATTPSLDSEGQEPALRSWGNHEARANLR). A Phosphothreonine modification is found at Thr-1268. The tract at residues 1339–1377 (FRPSLPAPESPGLPAHPSNPQLPEARPGIPGGTASLLEP) is disordered.

Can form homodimers (via C-terminus). Interacts (via C-terminus) with MAPKBP1 (via C-terminus). Interacts with CDK5RAP2, CEP152, CEP63 and KIAA0753. CEP63, CDK5RAP2, CEP152, WDR62 are proposed to form a stepwise assembled complex at the centrosome forming a ring near parental centrioles. As to expression, present in fetal brain, enriched within the ventricular and subventricular zone (at protein level). In the embryonic brain it is expressed in mitotic neural precursor cells.

It is found in the nucleus. The protein resides in the cytoplasm. The protein localises to the cytoskeleton. Its subcellular location is the spindle pole. It localises to the microtubule organizing center. It is found in the centrosome. The protein resides in the centriole. Its function is as follows. Required for cerebral cortical development. Plays a role in neuronal proliferation and migration. Plays a role in mother-centriole-dependent centriole duplication; the function also seems to involve CEP152, CDK5RAP2 and CEP63 through a stepwise assembled complex at the centrosome that recruits CDK2 required for centriole duplication. The polypeptide is WD repeat-containing protein 62 (WDR62) (Homo sapiens (Human)).